Consider the following 338-residue polypeptide: Protein mono-ADP-ribosyltransferase PARP11 (338 aa).

The residue at position 13 (E13) is an ADP-ribosyl glutamic acid. K18 carries the post-translational modification N6-(ADP-ribosyl)lysine. Residues 22-106 (NEVDDMDTSD…TTGKQRLIKR (85 aa)) form the WWE domain. C56 and C72 each carry ADP-ribosylcysteine. An ADP-ribosyl aspartic acid modification is found at D87. The PARP catalytic domain maps to 123–338 (IPMPPHWENV…IYPEYLIDFH (216 aa)).

This sequence belongs to the ARTD/PARP family. Interacts with PARP12; this interaction plays a role in zika virus suppression. In terms of processing, auto-mono-ADP-ribosylated.

The protein localises to the nucleus. It is found in the nuclear pore complex. It carries out the reaction L-aspartyl-[protein] + NAD(+) = 4-O-(ADP-D-ribosyl)-L-aspartyl-[protein] + nicotinamide. It catalyses the reaction L-cysteinyl-[protein] + NAD(+) = S-(ADP-D-ribosyl)-L-cysteinyl-[protein] + nicotinamide + H(+). The catalysed reaction is L-glutamyl-[protein] + NAD(+) = 5-O-(ADP-D-ribosyl)-L-glutamyl-[protein] + nicotinamide. The enzyme catalyses L-lysyl-[protein] + NAD(+) = N(6)-(ADP-D-ribosyl)-L-lysyl-[protein] + nicotinamide + H(+). Functionally, mono-ADP-ribosyltransferase that mediates mono-ADP-ribosylation of target proteins. Plays a role in nuclear envelope stability and nuclear remodeling during spermiogenesis. Inhibits the type I interferon activated signaling pathway. Mechanistically, mono-ADP-ribosylates beta-TrCP/BTRC to promote IFNAR1 ubiquitination and protect BTRC from ubiquitin-proteasome degradation. Additionally, acts as an antiviral factor by cooperating with PARP12 to suppress Zika virus replication, independent of IFNAR1 regulation or intrinsic PARP enzymatic activity. Instead, facilitates the degradation of viral NS1 and NS3 proteins, potentially disrupting viral replication. This is Protein mono-ADP-ribosyltransferase PARP11 from Homo sapiens (Human).